Reading from the N-terminus, the 302-residue chain is Small ribosomal subunit protein uS3 (302 aa).

Positions 17-86 constitute a KH type-2 domain; sequence IDEFFAEELA…DPQIDVQEVE (70 aa). Residues 222–302 are disordered; that stretch reads EDADAEDADA…EMDDEDGGAE (81 aa).

This sequence belongs to the universal ribosomal protein uS3 family. Part of the 30S ribosomal subunit.

Functionally, binds the lower part of the 30S subunit head. This chain is Small ribosomal subunit protein uS3, found in Halobacterium salinarum (strain ATCC 700922 / JCM 11081 / NRC-1) (Halobacterium halobium).